The primary structure comprises 452 residues: Scaffold protein ILK (452 aa).

ANK repeat units follow at residues 2–30 (DDIFTQCREGNAVAVRLWLDNTENDLNQG), 31–63 (DDHGFSPLHWACREGRSNVVDMLIMRGARINVM), 64–96 (NRGDDTPLHLAASHGHRDIVQKLIQFKADINAV), 97–129 (NEHGNTPLHYACFWGHDTVAEDLVGNGALVSIA), and 130–174 (NKYS…GTTR). A Protein kinase domain is found at 193–446 (LSLSQKLNEN…PKFDMIVPIL (254 aa)). 6 residues coordinate ATP: N200, N202, S204, H270, M272, and N279. D339 serves as a coordination point for Mg(2+). K341 is an ATP binding site. Positions 363–371 (KKPEEINRR) match the Nuclear localization signal motif.

It belongs to the protein kinase superfamily. TKL Ser/Thr protein kinase family. In terms of assembly, interacts with PXN/PAXILLIN (via LD motif 4).

It localises to the cell junction. Its subcellular location is the focal adhesion. The protein localises to the cell membrane. The protein resides in the cell projection. It is found in the lamellipodium. It localises to the cytoplasm. Its subcellular location is the myofibril. The protein localises to the sarcomere. The protein resides in the nucleus. It is found in the cytoskeleton. It localises to the microtubule organizing center. Its subcellular location is the centrosome. The protein localises to the cell cortex. Its function is as follows. Scaffold protein which mediates protein-protein interactions during a range of cellular events including focal adhesion assembly, cell adhesion and cell migration. In Gallus gallus (Chicken), this protein is Scaffold protein ILK.